An 86-amino-acid polypeptide reads, in one-letter code: High affinity immunoglobulin epsilon receptor subunit gamma (86 aa).

The first 18 residues, 1–18 (MYPAVVLLLLLLVEQAAA), serve as a signal peptide directing secretion. Over 19 to 23 (LGEPQ) the chain is Extracellular. Residues 24-44 (LCYILDAILFLYGIILTLLYC) traverse the membrane as a helical segment. Residues 45–86 (RLKIQVRKATVASYEKPDGIYTGLSTRNQETYETLKHEKPPQ) are Cytoplasmic-facing. One can recognise an ITAM domain in the interval 54-82 (TVASYEKPDGIYTGLSTRNQETYETLKHE). Tyrosine 65 is subject to Phosphotyrosine. Serine 69 carries the post-translational modification Phosphoserine. A Phosphotyrosine modification is found at tyrosine 76. Residue threonine 78 is modified to Phosphothreonine.

The protein belongs to the CD3Z/FCER1G family. In terms of assembly, igE Fc receptor is a tetramer of an alpha chain, a beta chain, and two disulfide linked gamma chains. Associates with FCGR1A; forms a functional signaling complex. The signaling subunit of immunoglobulin gamma (IgG) Fc receptor complex. As a homodimer or a heterodimer of CD247 and FCER1G, associates with the ligand binding subunit FCGR3A to form a functional receptor complex. Associates with CLEC6A. Interacts with CLEC4E. Interacts (via ITAM domain) with SYK (via SH2 domains); activates SYK, enabling integrin-mediated activation of neutrophils and macrophages. Interacts with CSF2RB and recruits SYK in response to IL3 stimulation; this interaction is direct. Interacts with CD300LH; the interaction may be indirect. Interacts with CD300LD. Interacts with TARM1.

Its subcellular location is the cell membrane. Functionally, adapter protein containing an immunoreceptor tyrosine-based activation motif (ITAM) that transduces activation signals from various immunoreceptors. As a component of the high-affinity immunoglobulin E (IgE) receptor, mediates allergic inflammatory signaling in mast cells. As a constitutive component of interleukin-3 receptor complex, selectively mediates interleukin 4/IL4 production by basophils priming T-cells toward effector T-helper 2 subset. Associates with pattern recognition receptors CLEC4D and CLEC4E to form a functional signaling complex in myeloid cells. Binding of mycobacterial trehalose 6,6'-dimycolate (TDM) to this receptor complex leads to phosphorylation of ITAM, triggering activation of SYK, CARD9 and NF-kappa-B, consequently driving maturation of antigen-presenting cells and shaping antigen-specific priming of T-cells toward effector T-helper 1 and T-helper 17 cell subtypes. May function cooperatively with other activating receptors. Functionally linked to integrin beta-2/ITGB2-mediated neutrophil activation. Also involved in integrin alpha-2/ITGA2-mediated platelet activation. This Cavia porcellus (Guinea pig) protein is High affinity immunoglobulin epsilon receptor subunit gamma (FCER1G).